Here is a 295-residue protein sequence, read N- to C-terminus: MKSRFENALASAPESLSRHLAPIILAADFDASLSTVQFDELLKQTGMTDNQLRVALLPFAAAYSYAPISEFYVGAIVRGLSGALYFGANMEFDGVQLGQTVHAEQSAISHAWMKGEQGLSDITINFSPCGHCRQFMNELSSAKELKIQLPEREEKKLHDYLPDSFGPSDLGIESALMSQVHHGFATEDDDALMQRAVEAMNRSHAPYTHNLSGVALQTESGRVYLGAYAENAAFNPSLPPLQVALIQLLLAGERFENIQSAALVESHKGKISHLACTQSTLEALNPDIPVSYLSL.

CMP/dCMP-type deaminase domains lie at 48–168 (TDNQ…FGPS) and 187–295 (EDDD…YLSL). A substrate-binding site is contributed by 89–91 (NME). His102 provides a ligand contact to Zn(2+). Glu104 acts as the Proton donor in catalysis. Cys129 and Cys132 together coordinate Zn(2+).

It belongs to the cytidine and deoxycytidylate deaminase family. As to quaternary structure, homodimer. It depends on Zn(2+) as a cofactor.

The catalysed reaction is cytidine + H2O + H(+) = uridine + NH4(+). The enzyme catalyses 2'-deoxycytidine + H2O + H(+) = 2'-deoxyuridine + NH4(+). This enzyme scavenges exogenous and endogenous cytidine and 2'-deoxycytidine for UMP synthesis. This chain is Cytidine deaminase, found in Vibrio vulnificus (strain CMCP6).